Consider the following 309-residue polypeptide: Putative S-adenosyl-L-methionine-dependent methyltransferase Mvan_0104 (309 aa).

S-adenosyl-L-methionine-binding positions include D134 and 163 to 164 (DL).

Belongs to the UPF0677 family.

Exhibits S-adenosyl-L-methionine-dependent methyltransferase activity. The protein is Putative S-adenosyl-L-methionine-dependent methyltransferase Mvan_0104 of Mycolicibacterium vanbaalenii (strain DSM 7251 / JCM 13017 / BCRC 16820 / KCTC 9966 / NRRL B-24157 / PYR-1) (Mycobacterium vanbaalenii).